A 315-amino-acid polypeptide reads, in one-letter code: Calcium homeostasis modulator protein 6 (315 aa).

Over 1–21 the chain is Cytoplasmic; it reads MEKFRAVLDLHVKHHSALGYG. The chain crosses the membrane as a helical span at residues 22–37; the sequence is LVTLLTAGGERIFSAV. The Extracellular portion of the chain corresponds to 38–46; sequence AFQCPCSAA. 3 disulfides stabilise this stretch: Cys-41–Cys-126, Cys-43–Cys-155, and Cys-139–Cys-146. A helical membrane pass occupies residues 47-68; it reads WNLPYGLVFLLVPALALFLLGY. The Cytoplasmic portion of the chain corresponds to 69–102; that stretch reads VLSARTWRLLTGCCSSARASCGSALRGSLVCTQI. The helical transmembrane segment at 103–127 threads the bilayer; the sequence is SAAAALAPLTWVAVALLGGAFYECA. Over 128–169 the chain is Extracellular; the sequence is ATGSAAFAQRLCLGRNRSCAAELPLVPCNQAKASDVQDLLKD. A helical transmembrane segment spans residues 170–192; sequence LKAQSQVLGWILIAVVIIILLIF. At 193 to 315 the chain is on the cytoplasmic side; the sequence is TSVTRCLSPV…SSGINSTPEL (123 aa).

It belongs to the CALHM family. Oligomerizes to form decameric and undecameric channels. N-glycosylated. As to expression, placenta.

Its subcellular location is the cell membrane. It catalyses the reaction ATP(in) = ATP(out). In terms of biological role, pore-forming subunit of an ATP-permeable channel. In response to pathogen-derived and proinflammatory stimuli, relocates from intracellular compartments to NK-dendritic cell and NK-macrophage immune synapses where it mediates ATP efflux and NK cell activation involved in antimicrobial and antitumor responses. May assemble to form gap junction channel-like structures with gating and ion conductance likely regulated by membrane lipids and voltage rather than by extracellular calcium levels. The chain is Calcium homeostasis modulator protein 6 from Homo sapiens (Human).